We begin with the raw amino-acid sequence, 35 residues long: Dermonecrotic toxin LdSicTox-alpha-1 (35 aa).

Residue His-11 is part of the active site. Positions 31 and 33 each coordinate Mg(2+).

It belongs to the arthropod phospholipase D family. Class I subfamily. It depends on Mg(2+) as a cofactor. Contains 1 disulfide bond. In terms of tissue distribution, expressed by the venom gland.

The protein localises to the secreted. It catalyses the reaction an N-(acyl)-sphingosylphosphocholine = an N-(acyl)-sphingosyl-1,3-cyclic phosphate + choline. The catalysed reaction is an N-(acyl)-sphingosylphosphoethanolamine = an N-(acyl)-sphingosyl-1,3-cyclic phosphate + ethanolamine. The enzyme catalyses a 1-acyl-sn-glycero-3-phosphocholine = a 1-acyl-sn-glycero-2,3-cyclic phosphate + choline. It carries out the reaction a 1-acyl-sn-glycero-3-phosphoethanolamine = a 1-acyl-sn-glycero-2,3-cyclic phosphate + ethanolamine. Its function is as follows. Dermonecrotic toxins cleave the phosphodiester linkage between the phosphate and headgroup of certain phospholipids (sphingolipid and lysolipid substrates), forming an alcohol (often choline) and a cyclic phosphate. This toxin acts on sphingomyelin (SM). It may also act on ceramide phosphoethanolamine (CPE), lysophosphatidylcholine (LPC) and lysophosphatidylethanolamine (LPE), but not on lysophosphatidylserine (LPS), and lysophosphatidylglycerol (LPG). It acts by transphosphatidylation, releasing exclusively cyclic phosphate products as second products. Induces dermonecrosis, hemolysis, increased vascular permeability, edema, inflammatory response, and platelet aggregation. This is Dermonecrotic toxin LdSicTox-alpha-1 from Loxosceles deserta (Desert recluse spider).